A 442-amino-acid polypeptide reads, in one-letter code: Cation channel sperm-associated protein 4 (442 aa).

The Cytoplasmic portion of the chain corresponds to 1–66; sequence MSEKHKWWQQ…TQMYIKQLLR (66 aa). Residues 67 to 88 form a helical membrane-spanning segment; that stretch reads HPAFQLLLAFLLLSNAITIALR. Topologically, residues 89 to 98 are extracellular; it reads TNSYLGQKHY. A helical membrane pass occupies residues 99-125; that stretch reads ELFSTIDDIVLTILICEVLLGWLNGFW. Topologically, residues 126 to 129 are cytoplasmic; the sequence is IFWK. Residues 130–153 form a helical membrane-spanning segment; it reads DGWNILNFAIVFILFMGFFIKQLD. Over 154 to 156 the chain is Extracellular; the sequence is MVA. A helical transmembrane segment spans residues 157–175; sequence ITYPLRVLRLVHVCMAVEP. Residues 176-188 lie on the Cytoplasmic side of the membrane; the sequence is LARIIKVILQSMP. The chain crosses the membrane as a helical span at residues 189-212; sequence DLANVMALILFFMLVFSVFGVTLF. Residues 213–222 lie on the Extracellular side of the membrane; that stretch reads GAFVPKHFQN. An intramembrane region (helical; Pore-forming) is located at residues 223–234; sequence MGVALYTLFICI. Residues 235 to 255 lie on the Extracellular side of the membrane; that stretch reads TQDGWLDIYTDFQMDEREYAM. The chain crosses the membrane as a helical span at residues 256-283; it reads EVGGAIYFAVFITLGAFIGLNLFVVVVT. Residues 284–442 lie on the Cytoplasmic side of the membrane; the sequence is TNLEQMMKTG…NMVNKHKFSH (159 aa).

The protein belongs to the cation channel sperm-associated (TC 1.A.1.19) family. In terms of assembly, component of the CatSper complex or CatSpermasome composed of the core pore-forming members CATSPER1, CATSPER2, CATSPER3 and CATSPER4 as well as auxiliary members CATSPERB, CATSPERG2, CATSPERD, CATSPERE, CATSPERZ, C2CD6/CATSPERT, SLCO6C1, TMEM249, TMEM262 and EFCAB9. HSPA1 may be an additional auxiliary complex member. The core complex members CATSPER1, CATSPER2, CATSPER3 and CATSPER4 form a heterotetrameric channel. The auxiliary CATSPERB, CATSPERG2, CATSPERD and CATSPERE subunits form a pavilion-like structure over the pore which stabilizes the complex through interactions with CATSPER4, CATSPER3, CATSPER1 and CATSPER2 respectively. SLCO6C1 interacts with CATSPERE and TMEM262/CATSPERH interacts with CATSPERB, further stabilizing the complex. C2CD6/CATSPERT interacts at least with CATSPERD and is required for targeting the CatSper complex in the flagellar membrane. In terms of tissue distribution, testis-specific.

It is found in the cell projection. The protein resides in the cilium. Its subcellular location is the flagellum membrane. The catalysed reaction is Ca(2+)(in) = Ca(2+)(out). Its activity is regulated as follows. In contrast to the human ortholog, not activated by progesterone. Activated by intracellular alkalinization. Its function is as follows. Pore-forming subunit of the CatSper complex, a sperm-specific voltage-gated calcium channel that plays a central role in sperm cell hyperactivation. Controls calcium entry to mediate the hyperactivated motility, a step needed for sperm motility which is essential late in the preparation of sperm for fertilization. In Mus musculus (Mouse), this protein is Cation channel sperm-associated protein 4 (Catsper4).